A 494-amino-acid chain; its full sequence is 3-octaprenyl-4-hydroxybenzoate carboxy-lyase (494 aa).

Residue asparagine 172 coordinates Mn(2+). Residues 175–177, 189–191, and 194–195 each bind prenylated FMN; these read IYR, RWL, and RG. Glutamate 238 provides a ligand contact to Mn(2+). Aspartate 294 acts as the Proton donor in catalysis.

The protein belongs to the UbiD family. As to quaternary structure, homohexamer. The cofactor is prenylated FMN. Mn(2+) is required as a cofactor.

Its subcellular location is the cell membrane. It carries out the reaction a 4-hydroxy-3-(all-trans-polyprenyl)benzoate + H(+) = a 2-(all-trans-polyprenyl)phenol + CO2. Its pathway is cofactor biosynthesis; ubiquinone biosynthesis. Catalyzes the decarboxylation of 3-octaprenyl-4-hydroxy benzoate to 2-octaprenylphenol, an intermediate step in ubiquinone biosynthesis. The chain is 3-octaprenyl-4-hydroxybenzoate carboxy-lyase from Janthinobacterium sp. (strain Marseille) (Minibacterium massiliensis).